Reading from the N-terminus, the 55-residue chain is Large ribosomal subunit protein bL33B (55 aa).

The protein belongs to the bacterial ribosomal protein bL33 family.

This is Large ribosomal subunit protein bL33B from Rhodococcus jostii (strain RHA1).